A 414-amino-acid polypeptide reads, in one-letter code: Lysocardiolipin acyltransferase 1 (414 aa).

2 helical membrane passes run 47-67 (FILT…SPFL) and 86-106 (ATWL…KVII). Residues 123–128 (HRTRMD) carry the HXXXXD motif motif. K221 is subject to N6-acetyllysine. 2 helical membrane passes run 340 to 360 (LRVL…SPAM) and 362 to 382 (LLIY…VIFV).

It belongs to the 1-acyl-sn-glycerol-3-phosphate acyltransferase family. In terms of tissue distribution, expressed at higher level in heart, kidney and pancreas than in brain, spleen, liver, lung, small intestine and placenta.

Its subcellular location is the endoplasmic reticulum membrane. It carries out the reaction a 1-acyl-sn-glycero-3-phosphate + an acyl-CoA = a 1,2-diacyl-sn-glycero-3-phosphate + CoA. It catalyses the reaction a 1-acyl-sn-glycero-3-phospho-(1D-myo-inositol) + an acyl-CoA = a 1,2-diacyl-sn-glycero-3-phospho-(1D-myo-inositol) + CoA. The enzyme catalyses 1-acyl-sn-glycero-3-phospho-(1'-sn-glycerol) + an acyl-CoA = a 1,2-diacyl-sn-glycero-3-phospho-(1'-sn-glycerol) + CoA. The catalysed reaction is 1-hexadecanoyl-sn-glycero-3-phosphate + (9Z)-octadecenoyl-CoA = 1-hexadecanoyl-2-(9Z-octadecenoyl)-sn-glycero-3-phosphate + CoA. It carries out the reaction 1-(9Z-octadecenoyl)-sn-glycero-3-phosphate + (9Z)-octadecenoyl-CoA = 1,2-di-(9Z-octadecenoyl)-sn-glycero-3-phosphate + CoA. It catalyses the reaction 1-(9Z,12Z)-octadecadienoyl-sn-glycero-3-phosphate + (9Z)-octadecenoyl-CoA = 1-(9Z,12Z)-octadecadienoyl-2-(9Z)-octadecenoyl-sn-glycero-3-phosphate + CoA. The enzyme catalyses 1-(9Z,12Z,15Z)-octadecatrienoyl-sn-glycero-3-phosphate + (9Z)-octadecenoyl-CoA = 1-(9Z,12Z,15Z)-octadecatrienoyl-2-(9Z)-octadecenoyl-sn-glycero-3-phosphate + CoA. The catalysed reaction is 1-(9Z-octadecenoyl)-sn-glycero-3-phosphate + hexadecanoyl-CoA = 1-(9Z)-octadecenoyl-2-hexadecanoyl-sn-glycero-3-phosphate + CoA. It carries out the reaction 1-(9Z-octadecenoyl)-sn-glycero-3-phosphate + octadecanoyl-CoA = 1-(9Z-octadecenoyl)-2-octadecanoyl-sn-glycero-3-phosphate + CoA. It catalyses the reaction 1-acyl-sn-glycero-3-phospho-(1'-sn-glycerol) + (9Z)-octadecenoyl-CoA = 1-acyl-2-(9Z-octadecenoyl)-sn-glycero-3-phospho-(1'-sn-glycerol) + CoA. The enzyme catalyses a 1-acyl-sn-glycero-3-phospho-(1D-myo-inositol) + (9Z)-octadecenoyl-CoA = a 1-acyl-2-(9Z-octadecenoyl)-sn-glycero-3-phospho-(1D-myo-inositol) + CoA. The catalysed reaction is 1-hexadecanoyl-sn-glycero-3-phospho-(1D-myo-inositol) + hexadecanoyl-CoA = 1,2-dihexadecanoyl-sn-glycero-3-phospho-(1D-myo-inositol) + CoA. It carries out the reaction 1-hexadecanoyl-sn-glycero-3-phospho-(1D-myo-inositol) + octadecanoyl-CoA = 1-hexadecanoyl-2-octadecanoyl-sn-glycero-3-phospho-(1D-myo-inositol) + CoA. It catalyses the reaction 1-hexadecanoyl-sn-glycero-3-phospho-(1D-myo-inositol) + (9Z)-octadecenoyl-CoA = 1-hexadecanoyl-2-(9Z-octadecenoyl)-sn-glycero-3-phospho-(1D-myo-inositol) + CoA. The enzyme catalyses 1-hexadecanoyl-sn-glycero-3-phospho-(1D-myo-inositol) + (9Z,12Z)-octadecadienoyl-CoA = 1-hexadecanoyl-2-(9Z,12Z-octadecadienoyl)-sn-glycero-3-phospho-(1D-myo-inositol) + CoA. The catalysed reaction is 1-hexadecanoyl-sn-glycero-3-phospho-(1D-myo-inositol) + (5Z,8Z,11Z,14Z)-eicosatetraenoyl-CoA = 1-hexadecanoyl-2-(5Z,8Z,11Z,14Z-eicosatetraenoyl)-sn-glycero-3-phospho-D-myo-inositol + CoA. It carries out the reaction 1-hexadecanoyl-sn-glycero-3-phospho-(1'-sn-glycerol) + hexadecanoyl-CoA = 1,2-dihexadecanoyl-sn-glycero-3-phospho-(1'-sn-glycerol) + CoA. It catalyses the reaction 1-hexadecanoyl-sn-glycero-3-phospho-(1'-sn-glycerol) + octadecanoyl-CoA = 1-hexadecanoyl-2-octadecanoyl-sn-glycero-3-phospho-(1'-sn-glycerol) + CoA. The enzyme catalyses 1-hexadecanoyl-sn-glycero-3-phospho-(1'-sn-glycerol) + (9Z)-octadecenoyl-CoA = 1-hexadecanoyl-2-(9Z-octadecenoyl)-sn-glycero-3-phospho-(1'-sn-glycerol) + CoA. The catalysed reaction is 1-hexadecanoyl-sn-glycero-3-phospho-(1'-sn-glycerol) + (9Z,12Z)-octadecadienoyl-CoA = 1-hexadecanoyl-2-(9Z,12Z-octadecadienoyl)-sn-glycero-3-phospho-(1'-sn-glycerol) + CoA. It carries out the reaction 1-tetradecanoyl-sn-glycero-3-phospho-(1'-sn-glycerol) + (9Z)-octadecenoyl-CoA = 1-tetradecanoyl-2-(9Z-octadecenoyl)-sn-glycero-3-phospho-(1'-sn-glycerol) + CoA. It catalyses the reaction 1-octadecanoyl-sn-glycero-3-phospho-(1'-sn-glycerol) + (9Z)-octadecenoyl-CoA = 1-octadecanoyl-2-(9Z-octadecenoyl)-sn-glycero-3-phospho-(1'-sn-glycerol) + CoA. The enzyme catalyses 1-(9Z-octadecenoyl)-sn-glycero-3-phospho-(1'-sn-glycerol) + (9Z)-octadecenoyl-CoA = 1,2-di-(9Z-octadecenoyl)-sn-glycero-3-phospho-(1'-sn-glycerol) + CoA. The catalysed reaction is 1-hexadecanoyl-sn-glycero-3-phospho-(1D-myo-inositol) + dodecanoyl-CoA = 1-hexadecanoyl-2-dodecanoyl-sn-glycero-3-phospho-(1D-myo-inositol) + CoA. It carries out the reaction 1',3'-bis-[1-acyl-sn-glycero-3-phospho]-glycerol + (9Z)-octadecenoyl-CoA = 1'-[1-acyl-2-(9Z)-octadecenoyl-sn-glycero-3-phospho],3'-[1-acyl,2-hydroxy-sn-glycero-3-phospho]-glycerol + CoA. It catalyses the reaction 1'-[1,2-diacyl-sn-glycero-3-phospho],3'-[1-acyl-sn-glycero-3-phospho]-glycerol + (9Z)-octadecenoyl-CoA = 1'-[1,2-diacyl-sn-glycero-3-phospho],3'-[1-acyl,2-(9Z)-octadecenoyl-sn-glycero-3-phospho]-glycerol + CoA. The enzyme catalyses 1'-[1,2-diacyl-sn-glycero-3-phospho],3'-[1-acyl-sn-glycero-3-phospho]-glycerol + (9Z,12Z)-octadecadienoyl-CoA = 1'-[1,2-diacyl-sn-glycero-3-phospho],3'-[1-acyl,2-(9Z,12Z)-octadecadienoyl-sn-glycero-3-phospho]-glycerol + CoA. The catalysed reaction is 1'-[1,2-diacyl-sn-glycero-3-phospho],3'-[1-acyl-sn-glycero-3-phospho]-glycerol + dodecanoyl-CoA = 1'-[1,2-diacyl-sn-glycero-3-phospho],3'-[1-acyl,2-dodecanoyl-sn-glycero-3-phospho]-glycerol + CoA. It carries out the reaction 1',3'-bis-[1-acyl-sn-glycero-3-phospho]-glycerol + dodecanoyl-CoA = 1'-[1-acyl-2-dodecanoyl-sn-glycero-3-phospho],3'-[1-acyl,2-hydroxy-sn-glycero-3-phospho]-glycerol + CoA. It catalyses the reaction a 1-acyl-sn-glycero-3-phosphate + (9Z)-octadecenoyl-CoA = a 1-acyl-2-(9Z-octadecenoyl)-sn-glycero-3-phosphate + CoA. The enzyme catalyses 1',3'-bis-[1-acyl-sn-glycero-3-phospho]-glycerol + (9Z,12Z)-octadecadienoyl-CoA = 1'-[1-acyl-2-(9Z,12Z)-octadecadienoyl-sn-glycero-3-phospho],3'-[1-acyl,2-hydroxy-sn-glycero-3-phospho]-glycerol + CoA. The catalysed reaction is 1',3'-bis-[1-acyl-sn-glycero-3-phospho]-glycerol + hexadecanoyl-CoA = 1'-[1-acyl-2-hexadecanoyl-sn-glycero-3-phospho],3'-[1-acyl,2-hydroxy-sn-glycero-3-phospho]-glycerol + CoA. It carries out the reaction 1',3'-bis-[1-acyl-sn-glycero-3-phospho]-glycerol + octadecanoyl-CoA = 1'-[1-acyl-2-octadecanoyl-sn-glycero-3-phospho],3'-[1-acyl,2-hydroxy-sn-glycero-3-phospho]-glycerol + CoA. It catalyses the reaction 1'-[1,2-diacyl-sn-glycero-3-phospho],3'-[1-acyl-sn-glycero-3-phospho]-glycerol + octanoyl-CoA = 1'-[1,2-diacyl-sn-glycero-3-phospho],3'-[1-acyl,2-octanoyl-sn-glycero-3-phospho]-glycerol + CoA. The enzyme catalyses 1',3'-bis-[1-acyl-sn-glycero-3-phospho]-glycerol + octanoyl-CoA = 1'-[1-acyl-2-octanoyl-sn-glycero-3-phospho],3'-[1-acyl,2-hydroxy-sn-glycero-3-phospho]-glycerol + CoA. The catalysed reaction is 1'-[1,2-diacyl-sn-glycero-3-phospho],3'-[1-acyl-sn-glycero-3-phospho]-glycerol + hexadecanoyl-CoA = 1'-[1,2-diacyl-sn-glycero-3-phospho],3'-[1-acyl,2-hexadecanoyl-sn-glycero-3-phospho]-glycerol + CoA. It carries out the reaction 1'-[1,2-diacyl-sn-glycero-3-phospho],3'-[1-acyl-sn-glycero-3-phospho]-glycerol + (5Z,8Z,11Z,14Z)-eicosatetraenoyl-CoA = 1'-[1,2-diacyl-sn-glycero-3-phospho],3'-[1-acyl,2-(5Z,8Z,11Z,14Z)-eicosatetraenoyl-sn-glycero-3-phospho]-glycerol + CoA. It catalyses the reaction 1',3'-bis-[1-acyl-sn-glycero-3-phospho]-glycerol + (5Z,8Z,11Z,14Z)-eicosatetraenoyl-CoA = 1'-[1-acyl-2-(5Z,8Z,11Z,14Z)-eicosatetraenoyl-sn-glycero-3-phospho],3'-[1-acyl,2-hydroxy-sn-glycero-3-phospho]-glycerol + CoA. The enzyme catalyses a 1-acyl-sn-glycero-3-phospho-(1D-myo-inositol) + octadecanoyl-CoA = a 1-acyl-2-octadecanoyl-sn-glycero-3-phospho-(1D-myo-inositol) + CoA. The catalysed reaction is a 2-acyl-sn-glycero-3-phospho-D-myo-inositol + octadecanoyl-CoA = 1-octadecanoyl-2-acyl-sn-glycero-3-phospho-1D-myo-inositol + CoA. It functions in the pathway phospholipid metabolism; CDP-diacylglycerol biosynthesis; CDP-diacylglycerol from sn-glycerol 3-phosphate: step 2/3. Functionally, exhibits acyl-CoA:lysocardiolipin acyltransferase (ALCAT) activity; catalyzes the reacylation of lyso-cardiolipin to cardiolipin (CL), a key step in CL remodeling. Recognizes both monolysocardiolipin and dilysocardiolipin as substrates with a preference for linoleoyl-CoA and oleoyl-CoA as acyl donors. Also exhibits 1-acyl-sn-glycerol-3-phosphate acyltransferase activity (AGPAT) activity; converts 1-acyl-sn-glycerol-3- phosphate (lysophosphatidic acid or LPA) into 1,2-diacyl-sn-glycerol-3- phosphate (phosphatidic acid or PA) by incorporating an acyl moiety at the sn-2 position of the glycerol backbone. Possesses both lysophosphatidylinositol acyltransferase (LPIAT) and lysophosphatidylglycerol acyltransferase (LPGAT) activities. Required for establishment of the hematopoietic and endothelial lineages. The sequence is that of Lysocardiolipin acyltransferase 1 (LCLAT1) from Homo sapiens (Human).